The primary structure comprises 314 residues: L-lactate dehydrogenase 2 (314 aa).

Residues valine 16, aspartate 37, lysine 42, tyrosine 68, and 82–83 (GV) contribute to the NAD(+) site. Glutamine 85 and arginine 91 together coordinate substrate. NAD(+)-binding positions include serine 104, 121-123 (ASN), and threonine 146. Residue 123-126 (NPVD) participates in substrate binding. 151–154 (DTTR) is a substrate binding site. Beta-D-fructose 1,6-bisphosphate is bound by residues arginine 156 and histidine 171. The Proton acceptor role is filled by histidine 178. The residue at position 223 (tyrosine 223) is a Phosphotyrosine. Threonine 232 lines the substrate pocket.

The protein belongs to the LDH/MDH superfamily. LDH family. Homotetramer.

Its subcellular location is the cytoplasm. It catalyses the reaction (S)-lactate + NAD(+) = pyruvate + NADH + H(+). It functions in the pathway fermentation; pyruvate fermentation to lactate; (S)-lactate from pyruvate: step 1/1. Its activity is regulated as follows. Allosterically activated by fructose 1,6-bisphosphate (FBP). Catalyzes the conversion of lactate to pyruvate. The chain is L-lactate dehydrogenase 2 from Lactococcus lactis subsp. lactis (strain IL1403) (Streptococcus lactis).